We begin with the raw amino-acid sequence, 582 residues long: Aspartate--tRNA ligase (582 aa).

E174 contacts L-aspartate. Residues 198–201 are aspartate; it reads QITK. Residue R220 coordinates L-aspartate. Residues 220–222 and Q229 each bind ATP; that span reads RDE. An L-aspartate-binding site is contributed by H443. E477 contacts ATP. R484 contacts L-aspartate. 529–532 provides a ligand contact to ATP; the sequence is GLDR.

The protein belongs to the class-II aminoacyl-tRNA synthetase family. Type 1 subfamily. Homodimer.

The protein resides in the cytoplasm. It catalyses the reaction tRNA(Asp) + L-aspartate + ATP = L-aspartyl-tRNA(Asp) + AMP + diphosphate. Catalyzes the attachment of L-aspartate to tRNA(Asp) in a two-step reaction: L-aspartate is first activated by ATP to form Asp-AMP and then transferred to the acceptor end of tRNA(Asp). In Streptococcus pyogenes serotype M6 (strain ATCC BAA-946 / MGAS10394), this protein is Aspartate--tRNA ligase.